We begin with the raw amino-acid sequence, 184 residues long: NADH-quinone oxidoreductase subunit B (184 aa).

The [4Fe-4S] cluster site is built by Cys37, Cys38, Cys103, and Cys132.

The protein belongs to the complex I 20 kDa subunit family. In terms of assembly, NDH-1 is composed of 14 different subunits. Subunits NuoB, C, D, E, F, and G constitute the peripheral sector of the complex. Requires [4Fe-4S] cluster as cofactor.

Its subcellular location is the cell membrane. The catalysed reaction is a quinone + NADH + 5 H(+)(in) = a quinol + NAD(+) + 4 H(+)(out). In terms of biological role, NDH-1 shuttles electrons from NADH, via FMN and iron-sulfur (Fe-S) centers, to quinones in the respiratory chain. The immediate electron acceptor for the enzyme in this species is believed to be a menaquinone. Couples the redox reaction to proton translocation (for every two electrons transferred, four hydrogen ions are translocated across the cytoplasmic membrane), and thus conserves the redox energy in a proton gradient. The polypeptide is NADH-quinone oxidoreductase subunit B (Mycolicibacterium gilvum (strain PYR-GCK) (Mycobacterium gilvum (strain PYR-GCK))).